We begin with the raw amino-acid sequence, 295 residues long: Zygote arrest protein 1.S (295 aa).

2 disordered regions span residues 80 to 115 (SVQC…TKTV) and 144 to 186 (EKGE…APAQ). Residues 144 to 176 (EKGEAVRSEGSEGGRQEGKQGDGEIKEQMKMDK) show a composition bias toward basic and acidic residues. A 3CxxC-type zinc finger spans residues 197–280 (KYGYYHCKDC…RQDLCGRCKG (84 aa)).

Belongs to the ZAR1 family. In terms of tissue distribution, ovary. Also expressed in lung and muscle.

It is found in the cytoplasm. It localises to the cytoplasmic ribonucleoprotein granule. Its function is as follows. mRNA-binding protein required for maternal mRNA storage, translation and degradation during oocyte maturation. Probably promotes formation of some phase-separated membraneless compartment that stores maternal mRNAs in oocytes: acts by undergoing liquid-liquid phase separation upon binding to maternal mRNAs. Binds to the 3'-UTR of maternal mRNAs in immature oocytes, inhibiting their translation. This is Zygote arrest protein 1.S (zar1.S) from Xenopus laevis (African clawed frog).